The following is a 701-amino-acid chain: Aryl hydrocarbon receptor repressor (701 aa).

The segment at 1–38 is disordered; that stretch reads MMIPSGECTYAGRKRRKPIQKRRLTMGTEKSNPSKRHR. Basic residues predominate over residues 12–24; the sequence is GRKRRKPIQKRRL. In terms of domain architecture, bHLH spans 25 to 78; sequence TMGTEKSNPSKRHRDRLNTELDHLASLLPFSPDIISKLDKLSVLRLSVSYLRVK. The PAS domain maps to 106–176; it reads PVQEGRLLLE…RQLHWAMDPP (71 aa). 2 disordered regions span residues 360–389 and 409–436; these read DPKG…QREM and TEQR…LVPH. Basic and acidic residues predominate over residues 365-375; sequence SGDREEDDQKH. Over residues 414–430 the composition is skewed to polar residues; sequence QEGTTKLTRQPSKSEPS. The needed for transcriptional repression stretch occupies residues 555-701; sequence ASTTSCVWLG…SKGSDGIFLP (147 aa). Residues Lys583 and Lys660 each participate in a glycyl lysine isopeptide (Lys-Gly) (interchain with G-Cter in SUMO2) cross-link.

As to quaternary structure, interacts with ARNT, ANKRA2, HDAC4 and HDAC5. Interacts with ARNT; forms a heterodimer with ARNT. Highly expressed in testis and weakly expressed in heart and liver. Highly expressed in small intestine and cecum in a male-dominant sexual dimorphic fashion.

The protein resides in the cytoplasm. It is found in the nucleus. Mediates dioxin toxicity and is involved in regulation of cell growth and differentiation. Represses the transcription activity of AHR by competing with this transcription factor for heterodimer formation with the ARNT and subsequently binding to the xenobiotic response element (XRE) sequence present in the promoter regulatory region of variety of genes. Represses CYP1A1 by binding the XRE sequence and recruiting ANKRA2, HDAC4 and/or HDAC5. Autoregulates its expression by associating with its own XRE site. The protein is Aryl hydrocarbon receptor repressor (Ahrr) of Rattus norvegicus (Rat).